A 544-amino-acid chain; its full sequence is CTP synthase (544 aa).

The interval 1–267 (MSKFVFVTGG…GDLLVSRLHL (267 aa)) is amidoligase domain. Ser13 lines the CTP pocket. Ser13 serves as a coordination point for UTP. 14 to 19 (SVGKGI) is a binding site for ATP. Tyr54 provides a ligand contact to L-glutamine. ATP is bound at residue Asp71. Mg(2+) is bound by residues Asp71 and Glu141. CTP is bound by residues 148–150 (DIE), 188–193 (KTKPTQ), and Lys224. UTP is bound by residues 188-193 (KTKPTQ) and Lys224. Residues 299–534 (YVELKDAYYS…INAAKKVIRD (236 aa)) enclose the Glutamine amidotransferase type-1 domain. An L-glutamine-binding site is contributed by Gly354. Cys381 serves as the catalytic Nucleophile; for glutamine hydrolysis. L-glutamine is bound by residues 382 to 385 (LGMQ), Glu405, and Arg462. Residues His507 and Glu509 contribute to the active site.

Belongs to the CTP synthase family. In terms of assembly, homotetramer.

The catalysed reaction is UTP + L-glutamine + ATP + H2O = CTP + L-glutamate + ADP + phosphate + 2 H(+). It catalyses the reaction L-glutamine + H2O = L-glutamate + NH4(+). It carries out the reaction UTP + NH4(+) + ATP = CTP + ADP + phosphate + 2 H(+). Its pathway is pyrimidine metabolism; CTP biosynthesis via de novo pathway; CTP from UDP: step 2/2. Its activity is regulated as follows. Allosterically activated by GTP, when glutamine is the substrate; GTP has no effect on the reaction when ammonia is the substrate. The allosteric effector GTP functions by stabilizing the protein conformation that binds the tetrahedral intermediate(s) formed during glutamine hydrolysis. Inhibited by the product CTP, via allosteric rather than competitive inhibition. Its function is as follows. Catalyzes the ATP-dependent amination of UTP to CTP with either L-glutamine or ammonia as the source of nitrogen. Regulates intracellular CTP levels through interactions with the four ribonucleotide triphosphates. This is CTP synthase from Dehalococcoides mccartyi (strain ATCC BAA-2266 / KCTC 15142 / 195) (Dehalococcoides ethenogenes (strain 195)).